The sequence spans 196 residues: Histone H1.0-B (196 aa).

Disordered regions lie at residues 1 to 29 and 86 to 196; these read MAEN…PKYS and GVGA…GRKK. One can recognise an H15 domain in the interval 24–97; sequence DHPKYSDMIL…GASGSFRLAK (74 aa). Residues 104–196 show a composition bias toward basic residues; that stretch reads PAKKPKKEIK…ASPKKSGRKK (93 aa).

Belongs to the histone H1/H5 family.

It localises to the nucleus. The protein resides in the chromosome. In terms of biological role, histones H1 are necessary for the condensation of nucleosome chains into higher-order structures. The histones H1.0 are found in cells that are in terminal stages of differentiation or that have low rates of cell division. The polypeptide is Histone H1.0-B (h1-0-b) (Xenopus laevis (African clawed frog)).